The primary structure comprises 635 residues: MRYSLSLALLGVAAVTVVAHPHTPGRHGVERRAIDLDAFRLQPTAEYVPKEEVPDQSSLAFISNDNYVDVATDLVKSVAPGIEFRVVGDHYVGTNGVAHVNFKQTAHGIDIDNADFNVNVRDGKVFSYGNSFFTGKIPEESPLKKRDFSDPTVALTGATTVLQLPISGEAKAEAKEGTETYTLKGTSGAVSDPEARLVYLVRDDSLALTWRVETDIEDNWLLSYVDANNKEQVHGVVDYVSHASFQVYPWGTNDPLEAGAARVTLTDPWDKASSPFGWLSDGTSTYTTTRGNNAIAQSNPSGGTAYLNNYRPTNANSIFSYPWTPAMSPPSSFVDFSATQLFYTANVFHDLLYKLGFTEAAGNFQVNNNGKGGLGNDQVILNTQDGSGTNNANFATPPDGQNGRMRMYIWTYTTPQRDSSLEAGVVIHEYTHGLSNRLTGGPSNSGCLSALEAGGMGEGWSDFFATAARIKQNDTADTDYPMGEWVAANPKGIRAYPYSTSLTRNPQTYATTNTLSTVHPIGNVWATVLYEVLWALVGKHGLQVSTFPTFDASGVPTSGNFLAQKLVLDGMALQPCNPNFVQARDAIIDADQALTGGANKCELWTAFAKRGLGSGAKYAASKRSVESKTIPAGVC.

A signal peptide spans 1–19 (MRYSLSLALLGVAAVTVVA). The propeptide occupies 20–242 (HPHTPGRHGV…VHGVVDYVSH (223 aa)). His-428 contacts Zn(2+). Glu-429 is an active-site residue. A Zn(2+)-binding site is contributed by His-432. N-linked (GlcNAc...) asparagine glycosylation occurs at Asn-473.

The protein belongs to the peptidase M36 family. Zn(2+) is required as a cofactor.

It is found in the secreted. Its function is as follows. Secreted metalloproteinase that allows assimilation of proteinaceous substrates. In Pyricularia oryzae (strain 70-15 / ATCC MYA-4617 / FGSC 8958) (Rice blast fungus), this protein is Extracellular metalloproteinase MEP (MEP).